The following is a 261-amino-acid chain: Kynurenine formamidase (261 aa).

Ser-9 carries the phosphoserine modification. An HGGXW motif is present at residues 36–40 (HGGAW). Ser-110 (nucleophile) is an active-site residue. Catalysis depends on residues Asp-211 and His-243.

This sequence belongs to the kynurenine formamidase family. As to quaternary structure, homodimer.

It carries out the reaction N-formyl-L-kynurenine + H2O = L-kynurenine + formate + H(+). It participates in amino-acid degradation; L-tryptophan degradation via kynurenine pathway; L-kynurenine from L-tryptophan: step 2/2. In terms of biological role, catalyzes the hydrolysis of N-formyl-L-kynurenine to L-kynurenine, the second step in the kynurenine pathway of tryptophan degradation. Kynurenine may be further oxidized to nicotinic acid, NAD(H) and NADP(H). Required for elimination of toxic metabolites. The protein is Kynurenine formamidase of Saccharomyces cerevisiae (strain ATCC 204508 / S288c) (Baker's yeast).